A 919-amino-acid polypeptide reads, in one-letter code: Alpha-amylase (919 aa).

The signal sequence occupies residues 1–33; it reads MPATRRTARVRRVAAVTVTALAAALLPPLAARA. Asn-182 and Asp-281 together coordinate Ca(2+). Asp-312 serves as the catalytic Nucleophile. His-316 is a binding site for Ca(2+). Residue Glu-346 is the Proton donor of the active site. The interval 704-729 is disordered; sequence ASGRLHHRHPARRGGAHRRLPGPRGR. Basic residues predominate over residues 707–724; it reads RLHHRHPARRGGAHRRLP.

This sequence belongs to the glycosyl hydrolase 13 family. As to quaternary structure, monomer. Ca(2+) serves as cofactor.

Its subcellular location is the secreted. The catalysed reaction is Endohydrolysis of (1-&gt;4)-alpha-D-glucosidic linkages in polysaccharides containing three or more (1-&gt;4)-alpha-linked D-glucose units.. This is Alpha-amylase (amy) from Streptomyces lividans.